The sequence spans 213 residues: MWFSGKKEQTIISLFFKHIDKVEETLKCVFDLIKKYLEDTDDIESLYLRTQRLESEADRLRRKTEMEMYSGAFLPNFRGDLLGLIESVDKVANKAEYVADLIVLQKPEVPHELKDLILSQMEYSLKAYESLKSALKFLFEDLERVEEFVLAVEKYEHDEDAVERTALRKLFEMDIERSVKLEVKELIRSIGDIADRTEDVSDRAEIILLKRRF.

Belongs to the UPF0111 family.

In Thermotoga maritima (strain ATCC 43589 / DSM 3109 / JCM 10099 / NBRC 100826 / MSB8), this protein is UPF0111 protein TM_0914.